We begin with the raw amino-acid sequence, 354 residues long: Release factor glutamine methyltransferase (354 aa).

S-adenosyl-L-methionine is bound by residues 174-178, Asp197, and Asn241; that span reads GSGSG. Residue 241–244 coordinates substrate; the sequence is NPPY.

The protein belongs to the protein N5-glutamine methyltransferase family. PrmC subfamily.

It catalyses the reaction L-glutaminyl-[peptide chain release factor] + S-adenosyl-L-methionine = N(5)-methyl-L-glutaminyl-[peptide chain release factor] + S-adenosyl-L-homocysteine + H(+). Methylates the class 1 translation termination release factors RF1/PrfA and RF2/PrfB on the glutamine residue of the universally conserved GGQ motif. The sequence is that of Release factor glutamine methyltransferase from Fusobacterium nucleatum subsp. nucleatum (strain ATCC 25586 / DSM 15643 / BCRC 10681 / CIP 101130 / JCM 8532 / KCTC 2640 / LMG 13131 / VPI 4355).